A 410-amino-acid chain; its full sequence is Putative ribosomal large subunit pseudouridine synthase SVR1, chloroplastic (410 aa).

A chloroplast-targeting transit peptide spans 1-35 (MASVAASSSISFAASFLKIKAFPLSPRFFPIRTLR). The segment at 96-143 (HNLAIDATTQNPKKKDKSKKKQPQATSSSSATTTASSPASHSEVKPKL) is disordered. Basic residues predominate over residues 107-117 (PKKKDKSKKKQ). A compositionally biased stretch (low complexity) spans 118–135 (PQATSSSSATTTASSPAS). The S4 RNA-binding domain occupies 160 to 229 (QRLSKVLAAA…PKVYFALNKP (70 aa)). The Nucleophile role is filled by D274.

The protein belongs to the pseudouridine synthase RsuA family. In terms of tissue distribution, highly expressed in young seedlings. Expressed in roots, rosette leaves, cauline leaves, stems and flowers.

Its subcellular location is the plastid. The protein resides in the chloroplast. In terms of biological role, responsible for synthesis of pseudouridine in chloroplastic 23S ribosomal RNA. Necessary for normal chloroplast rRNA processing and translation. Required for normal chloroplast development and maintenance. May function in other plastids, such as root amyloplasts. This Arabidopsis thaliana (Mouse-ear cress) protein is Putative ribosomal large subunit pseudouridine synthase SVR1, chloroplastic (SVR1).